The chain runs to 72 residues: Translation initiation factor IF-1 (72 aa).

Residues 1-72 (MAKEESIKMN…SKGRITYRAR (72 aa)) form the S1-like domain.

Belongs to the IF-1 family. As to quaternary structure, component of the 30S ribosomal translation pre-initiation complex which assembles on the 30S ribosome in the order IF-2 and IF-3, IF-1 and N-formylmethionyl-tRNA(fMet); mRNA recruitment can occur at any time during PIC assembly.

It localises to the cytoplasm. Functionally, one of the essential components for the initiation of protein synthesis. Stabilizes the binding of IF-2 and IF-3 on the 30S subunit to which N-formylmethionyl-tRNA(fMet) subsequently binds. Helps modulate mRNA selection, yielding the 30S pre-initiation complex (PIC). Upon addition of the 50S ribosomal subunit IF-1, IF-2 and IF-3 are released leaving the mature 70S translation initiation complex. The chain is Translation initiation factor IF-1 from Alkalilimnicola ehrlichii (strain ATCC BAA-1101 / DSM 17681 / MLHE-1).